The primary structure comprises 290 residues: DegV domain-containing protein MG450 (290 aa).

One can recognise a DegV domain in the interval 3–289 (IAFLVDSVSN…INSYAFLIQT (287 aa)). Positions 65 and 97 each coordinate hexadecanoate.

Its function is as follows. May bind long-chain fatty acids, such as palmitate, and may play a role in lipid transport or fatty acid metabolism. The sequence is that of DegV domain-containing protein MG450 from Mycoplasma genitalium (strain ATCC 33530 / DSM 19775 / NCTC 10195 / G37) (Mycoplasmoides genitalium).